The sequence spans 57 residues: MSGTTVLLLTCLFLVTMATSDCDLYDDSCTGTEICCTPPGDYQGNCMEGEDCPSGGR.

An N-terminal signal peptide occupies residues 1–18 (MSGTTVLLLTCLFLVTMA). Disulfide bonds link Cys22–Cys36, Cys29–Cys46, and Cys35–Cys52.

As to expression, expressed by the venom duct.

The protein localises to the secreted. Functionally, probable neurotoxin. The protein is Conotoxin Cal6.39 of Californiconus californicus (California cone).